The chain runs to 407 residues: Nicotinate phosphoribosyltransferase (407 aa).

Residue His-224 is modified to Phosphohistidine; by autocatalysis.

This sequence belongs to the NAPRTase family. Post-translationally, transiently phosphorylated on a His residue during the reaction cycle. Phosphorylation strongly increases the affinity for substrates and increases the rate of nicotinate D-ribonucleotide production. Dephosphorylation regenerates the low-affinity form of the enzyme, leading to product release.

It catalyses the reaction nicotinate + 5-phospho-alpha-D-ribose 1-diphosphate + ATP + H2O = nicotinate beta-D-ribonucleotide + ADP + phosphate + diphosphate. It participates in cofactor biosynthesis; NAD(+) biosynthesis; nicotinate D-ribonucleotide from nicotinate: step 1/1. In terms of biological role, catalyzes the synthesis of beta-nicotinate D-ribonucleotide from nicotinate and 5-phospho-D-ribose 1-phosphate at the expense of ATP. This chain is Nicotinate phosphoribosyltransferase, found in Pseudomonas savastanoi pv. phaseolicola (strain 1448A / Race 6) (Pseudomonas syringae pv. phaseolicola (strain 1448A / Race 6)).